The chain runs to 288 residues: Heme oxygenase 1 (288 aa).

Over 1 to 265 (MERPQPDSMP…KPPLNTRSQA (265 aa)) the chain is Cytoplasmic. Heme b contacts are provided by Lys-18, His-25, Tyr-134, and Arg-183. A disordered region spans residues 223 to 260 (HDTKDQSPSRAPGLRQRASNKVQDSAPVETPRGKPPLN). Residue Ser-229 is modified to Phosphoserine. The chain crosses the membrane as a helical; Anchor for type IV membrane protein span at residues 266 to 288 (PLLRWVLTLSFLVATVAVGLYAM).

The protein belongs to the heme oxygenase family. As to quaternary structure, (Microbial infection) Interacts with SARS-CoV-2 ORF3A protein; the interaction promotes ORF3A-induced autophagy but is unlikely to be involved in ORF3A-mediated induction of reticulophagy. Homodimer and higher order homooligomer. Oligomerization is crucial for its stability and function in the endoplasmic reticulum. Interacts with FLVCR2; this interaction is potentiated in the presence of heme. Post-translationally, a soluble form arises by proteolytic removal of the membrane anchor. Expressed at higher levels in renal cancer tissue than in normal tissue (at protein level).

It is found in the endoplasmic reticulum membrane. The catalysed reaction is heme b + 3 reduced [NADPH--hemoprotein reductase] + 3 O2 = biliverdin IXalpha + CO + Fe(2+) + 3 oxidized [NADPH--hemoprotein reductase] + 3 H2O + H(+). Catalyzes the oxidative cleavage of heme at the alpha-methene bridge carbon, released as carbon monoxide (CO), to generate biliverdin IXalpha, while releasing the central heme iron chelate as ferrous iron. Affords protection against programmed cell death and this cytoprotective effect relies on its ability to catabolize free heme and prevent it from sensitizing cells to undergo apoptosis. In terms of biological role, (Microbial infection) During SARS-COV-2 infection, promotes SARS-CoV-2 ORF3A-mediated autophagy but is unlikely to be required for ORF3A-mediated induction of reticulophagy. Its function is as follows. Catalyzes the oxidative cleavage of heme at the alpha-methene bridge carbon, released as carbon monoxide (CO), to generate biliverdin IXalpha, while releasing the central heme iron chelate as ferrous iron. The sequence is that of Heme oxygenase 1 (HMOX1) from Homo sapiens (Human).